The primary structure comprises 88 residues: Small ribosomal subunit protein bS18 (88 aa).

The disordered stretch occupies residues methionine 1–cysteine 26.

Belongs to the bacterial ribosomal protein bS18 family. Part of the 30S ribosomal subunit. Forms a tight heterodimer with protein bS6.

In terms of biological role, binds as a heterodimer with protein bS6 to the central domain of the 16S rRNA, where it helps stabilize the platform of the 30S subunit. This chain is Small ribosomal subunit protein bS18, found in Xanthobacter autotrophicus (strain ATCC BAA-1158 / Py2).